The primary structure comprises 96 residues: MAEISKDQVKHVAHLARLELDDEAVEKMSDELSAIIDFAEQLNELDTDSVEPTTHVLNLKNVMRKDEPKKWISQEDALRNAPDHKDGQIRVPSILE.

It belongs to the GatC family. In terms of assembly, heterotrimer of A, B and C subunits.

It carries out the reaction L-glutamyl-tRNA(Gln) + L-glutamine + ATP + H2O = L-glutaminyl-tRNA(Gln) + L-glutamate + ADP + phosphate + H(+). The enzyme catalyses L-aspartyl-tRNA(Asn) + L-glutamine + ATP + H2O = L-asparaginyl-tRNA(Asn) + L-glutamate + ADP + phosphate + 2 H(+). Functionally, allows the formation of correctly charged Asn-tRNA(Asn) or Gln-tRNA(Gln) through the transamidation of misacylated Asp-tRNA(Asn) or Glu-tRNA(Gln) in organisms which lack either or both of asparaginyl-tRNA or glutaminyl-tRNA synthetases. The reaction takes place in the presence of glutamine and ATP through an activated phospho-Asp-tRNA(Asn) or phospho-Glu-tRNA(Gln). The chain is Aspartyl/glutamyl-tRNA(Asn/Gln) amidotransferase subunit C from Oceanobacillus iheyensis (strain DSM 14371 / CIP 107618 / JCM 11309 / KCTC 3954 / HTE831).